A 503-amino-acid chain; its full sequence is Alpha-1B-glycoprotein (503 aa).

Residues 1 to 21 (MSAWAALLLLWGLSLSPVTEQ) form the signal peptide. 5 Ig-like V-type domains span residues 27–115 (PRPS…EVTG), 117–204 (EPLP…TVTI), 208–305 (DPPP…LVLS), 307–405 (GTLP…LRVD), and 406–501 (GPLP…LRVA). A disulfide bridge links Cys49 with Cys96. 2 N-linked (GlcNAc...) asparagine glycosylation sites follow: Asn137 and Asn182. Intrachain disulfides connect Cys142–Cys185, Cys235–Cys282, Cys333–Cys382, and Cys431–Cys478. An N-linked (GlcNAc...) asparagine glycan is attached at Asn379.

In terms of assembly, interacts with CRISP3. As to expression, plasma.

The protein localises to the secreted. This is Alpha-1B-glycoprotein from Bos taurus (Bovine).